The sequence spans 248 residues: Ras-related protein Rab-28 (248 aa).

The tract at residues 1-30 (MTTMGEDEAPALPKKSPLPEKIDEADVDDD) is disordered. Residue 42-50 (GDGASGKTS) participates in GTP binding. An Effector region motif is present at residues 64 to 72 (YHQTLGLDF). Residues 91-95 (DIGGQ), 152-155 (NKTD), and 182-184 (SAK) contribute to the GTP site. The disordered stretch occupies residues 227–248 (QSDASYARRSDQSRSTSVCSIT). Over residues 239–248 (SRSTSVCSIT) the composition is skewed to polar residues.

The protein belongs to the small GTPase superfamily. Rab family. Expressed in amphid and phasmid ciliated sensory neurons.

The protein localises to the cell projection. It localises to the cilium membrane. Its subcellular location is the perikaryon. It is found in the cytoplasm. The protein resides in the cytoskeleton. The protein localises to the cilium axoneme. In terms of biological role, GTPase. Intraflagellar transport (IFT) cargo that undergoes bidirectional IFT along the ciliary axoneme when in active GTP-bound state in amphid and phasmid ciliated sensory neurons. Targeting and function as IFT cargo may depend on the BBSome, an IFT cargo adapter. Does not undergo IFT when in inactive GDP-bound state. May in turn play a role in cilium structure and/or function in ciliated sensory neurons. This chain is Ras-related protein Rab-28, found in Caenorhabditis elegans.